Consider the following 513-residue polypeptide: MEISGRRMRRFRMRFRRDHLTGGENIENEASCCYCDLKISNFNEPIFRLGRRFSGVLKVWFSIGLGFGVASLILVTVFLLLQFHSNPLFSNRLTSAVFGFSPSTRVSLSGIAYVLVSTVITVSVHELGHALAAASEGIQMEYIAVFIAAIFPGGLVAFDNDVLQSLPSFNALRIYCAGIWHNAVFCALCVFALFLLPVMLSPFYKHGESLTVVDVPSVSPLFGYLSPGDVIVSLDGIQVHKPSEWLELAAILDKENSKTSNGSLYLGGSRRFHHGKGYCVPISLIEEGYKGKMVENQFVCPGDLTAFRTMPCSNAAIREVSVCLDAKDIVKLQKCGDGWVTTSDTDNQSDCVCPQGDLCLQAMQSPGVLWTEITYKRTSSQDCSRLGLDFNTSNCLGTFVFVGDLIAMSHSVHLTAYQPRWLFNFFGKSFPNILERSLTCTFHVSLALVLLNSLPVYYLDGESILESSLQSFTWLSPRKKKKALQVCLVGGSLLSFLAFFRIFLLGLPLSRRW.

Residues 1-60 (MEISGRRMRRFRMRFRRDHLTGGENIENEASCCYCDLKISNFNEPIFRLGRRFSGVLKVW) lie on the Cytoplasmic side of the membrane. The chain crosses the membrane as a helical span at residues 61 to 81 (FSIGLGFGVASLILVTVFLLL). Residues 82-107 (QFHSNPLFSNRLTSAVFGFSPSTRVS) are Lumenal-facing. A helical membrane pass occupies residues 108–128 (LSGIAYVLVSTVITVSVHELG). His-125 contacts Zn(2+). The active site involves Glu-126. Residue His-129 participates in Zn(2+) binding. The Cytoplasmic portion of the chain corresponds to 129-137 (HALAAASEG). Residues 138-158 (IQMEYIAVFIAAIFPGGLVAF) form a helical membrane-spanning segment. The Lumenal portion of the chain corresponds to 159-182 (DNDVLQSLPSFNALRIYCAGIWHN). Residues 183 to 203 (AVFCALCVFALFLLPVMLSPF) traverse the membrane as a helical segment. Topologically, residues 204–437 (YKHGESLTVV…KSFPNILERS (234 aa)) are cytoplasmic. A helical transmembrane segment spans residues 438 to 458 (LTCTFHVSLALVLLNSLPVYY). The Lumenal segment spans residues 459 to 485 (LDGESILESSLQSFTWLSPRKKKKALQ). The chain crosses the membrane as a helical span at residues 486–506 (VCLVGGSLLSFLAFFRIFLLG). Over 507–513 (LPLSRRW) the chain is Cytoplasmic.

It belongs to the peptidase M50A family. It depends on Zn(2+) as a cofactor. As to expression, expressed in the vasculature of roots, cotyledons and leaves.

Its subcellular location is the golgi apparatus membrane. Metalloprotease that catalyzes the second step (site-2 cleavage) in the proteolytic activation of various factors, after site-1 cleavage. Part of a regulated intramembrane proteolysis (RIP) cascade. After ER stress, cleaves BZIP17 and BZIP28 proteins which function as stress sensors and transducers in ER stress signaling pathway. The N-terminal bZIP component is translocated to the nucleus, where it activates the expression and production of ER chaperones, as well as proteins involved in brassinosteroid (BR) signaling, which is required for stress acclimation and growth. The chain is Membrane-bound transcription factor site-2 protease homolog (S2P) from Arabidopsis thaliana (Mouse-ear cress).